The following is an 821-amino-acid chain: Putative outer membrane usher protein YqiG (821 aa).

A signal peptide spans Met-1 to Ala-20. Cysteines 798 and 817 form a disulfide.

The protein belongs to the fimbrial export usher family.

The protein localises to the cell outer membrane. In terms of biological role, may be involved in H(2) production during fermentative growth. Involved in the export and assembly of a fimbrial subunit across the outer membrane. The protein is Putative outer membrane usher protein YqiG (yqiG) of Escherichia coli (strain K12).